We begin with the raw amino-acid sequence, 431 residues long: Histidine--tRNA ligase (431 aa).

Belongs to the class-II aminoacyl-tRNA synthetase family. As to quaternary structure, homodimer.

Its subcellular location is the cytoplasm. It catalyses the reaction tRNA(His) + L-histidine + ATP = L-histidyl-tRNA(His) + AMP + diphosphate + H(+). This Neisseria gonorrhoeae (strain ATCC 700825 / FA 1090) protein is Histidine--tRNA ligase.